Consider the following 231-residue polypeptide: ATP-dependent dethiobiotin synthetase BioD (231 aa).

Position 12–17 (12–17) interacts with ATP; sequence DVGKTV. Mg(2+) is bound at residue threonine 16. The active site involves lysine 37. A substrate-binding site is contributed by threonine 41. Residues aspartate 50, 109 to 112, 170 to 171, and 200 to 202 contribute to the ATP site; these read EGAG, GS, and PAG. Mg(2+) is bound by residues aspartate 50 and glutamate 109.

The protein belongs to the dethiobiotin synthetase family. As to quaternary structure, homodimer. Requires Mg(2+) as cofactor.

It localises to the cytoplasm. The enzyme catalyses (7R,8S)-7,8-diammoniononanoate + CO2 + ATP = (4R,5S)-dethiobiotin + ADP + phosphate + 3 H(+). It functions in the pathway cofactor biosynthesis; biotin biosynthesis; biotin from 7,8-diaminononanoate: step 1/2. In terms of biological role, catalyzes a mechanistically unusual reaction, the ATP-dependent insertion of CO2 between the N7 and N8 nitrogen atoms of 7,8-diaminopelargonic acid (DAPA, also called 7,8-diammoniononanoate) to form a ureido ring. In Rhodococcus jostii (strain RHA1), this protein is ATP-dependent dethiobiotin synthetase BioD.